The primary structure comprises 172 residues: uncharacterized protein (172 aa).

A run of 4 helical transmembrane segments spans residues 1 to 21 (MLFINITFACILAIRFYSLSI), 41 to 61 (NSTLLSIAHVAFYFAAIIEAN), 72 to 92 (QIGLAILIFAIAMLFYVIYEL), and 136 to 156 (FCQAKYTALVGLPIYLLILAV).

It is found in the cell membrane. This is an uncharacterized protein from Haemophilus influenzae (strain ATCC 51907 / DSM 11121 / KW20 / Rd).